The sequence spans 132 residues: Interleukin-5 (132 aa).

Residues 1-19 (MRMLLHLSILTLACVWTFA) form the signal peptide. N45, N74, and N88 each carry an N-linked (GlcNAc...) asparagine glycan.

This sequence belongs to the IL-5 family. In terms of assembly, homodimer; disulfide-linked. Interacts with IL5RA. Interacts with CSF2RB.

The protein resides in the secreted. Its function is as follows. Homodimeric cytokine expressed predominantly by T-lymphocytes and NK cells that plays an important role in the survival, differentiation, and chemotaxis of eosinophils. Also acts on activated and resting B-cells to induce immunoglobulin production, growth, and differentiation. Mechanistically, exerts its biological effects through a receptor composed of IL5RA subunit and the cytokine receptor common subunit beta/CSF2RB. Binding to the receptor leads to activation of various kinases including LYN, SYK and JAK2 and thereby propagates signals through the RAS-MAPK and JAK-STAT5 pathways respectively. This is Interleukin-5 (IL5) from Sigmodon hispidus (Hispid cotton rat).